The chain runs to 937 residues: Chaperone protein ClpD2, chloroplastic (937 aa).

A chloroplast-targeting transit peptide spans 1–80 (MEACCCSSSS…FERFTERAVK (80 aa)). 2 repeat regions span residues 81–137 (AVVF…VGKE) and 152–217 (FSGA…VQGE). Positions 81–217 (AVVFSQREAR…KQALTRVQGE (137 aa)) constitute a Clp R domain. Residues 259 to 513 (LALFCLDLTM…RMESFKRKKE (255 aa)) are i. Residues 304–311 (GEAGVGKT) and 658–665 (GPTGVGKT) contribute to the ATP site. Residues 584–775 (VGSEEIARVT…LIVMTSNVGS (192 aa)) are II.

This sequence belongs to the ClpA/ClpB family. ClpD subfamily. In terms of tissue distribution, highly expressed in stems, culms and leaves.

It is found in the plastid. The protein localises to the chloroplast. Molecular chaperone that may interact with a ClpP-like protease involved in degradation of denatured proteins in the chloroplast. The polypeptide is Chaperone protein ClpD2, chloroplastic (CLPD2) (Oryza sativa subsp. japonica (Rice)).